A 177-amino-acid chain; its full sequence is Coatomer subunit zeta-1 (177 aa).

Belongs to the adaptor complexes small subunit family. Oligomeric complex that consists of at least the alpha, beta, beta', gamma, delta, epsilon and zeta subunits.

The protein resides in the cytoplasm. The protein localises to the golgi apparatus membrane. Its subcellular location is the cytoplasmic vesicle. It localises to the COPI-coated vesicle membrane. The coatomer is a cytosolic protein complex that binds to dilysine motifs and reversibly associates with Golgi non-clathrin-coated vesicles, which further mediate biosynthetic protein transport from the ER, via the Golgi up to the trans Golgi network. Coatomer complex is required for budding from Golgi membranes, and is essential for the retrograde Golgi-to-ER transport of dilysine-tagged proteins. The zeta subunit may be involved in regulating the coat assembly and, hence, the rate of biosynthetic protein transport due to its association-dissociation properties with the coatomer complex. The protein is Coatomer subunit zeta-1 (COPZ1) of Oryza sativa subsp. japonica (Rice).